The sequence spans 319 residues: Protein sprouty homolog 1 (319 aa).

An N-acetylmethionine modification is found at Met1. Disordered stretches follow at residues 54 to 78 (TEGP…ERTH) and 100 to 160 (AVLP…QPKQ). Positions 69 to 78 (PRQEKHERTH) are enriched in basic and acidic residues. A compositionally biased stretch (low complexity) spans 112–131 (SRSTSTGSAASSGSNSSASS). The 113-residue stretch at 183 to 295 (QCGKCKCGEC…CYDWIHRPGC (113 aa)) folds into the SPR domain.

This sequence belongs to the sprouty family. In terms of assembly, forms heterodimers with SPRY2. Interacts with TESK1. Interacts with CAV1 (via C-terminus).

The protein resides in the cytoplasm. It is found in the membrane. Inhibits fibroblast growth factor (FGF)-induced retinal lens fiber differentiation, probably by inhibiting FGF-mediated phosphorylation of ERK1/2. Inhibits TGFB-induced epithelial-to-mesenchymal transition in lens epithelial cells. The chain is Protein sprouty homolog 1 (SPRY1) from Homo sapiens (Human).